The following is a 433-amino-acid chain: tRNA-2-methylthio-N(6)-dimethylallyladenosine synthase (433 aa).

An MTTase N-terminal domain is found at 3 to 118 (KKLFIQTLGC…ITKAVNTPKF (116 aa)). 6 residues coordinate [4Fe-4S] cluster: cysteine 12, cysteine 49, cysteine 81, cysteine 150, cysteine 154, and cysteine 157. Residues 136-369 (RGSPYKSHIN…QNRHSEILDE (234 aa)) form the Radical SAM core domain. The region spanning 372-433 (AAQKDKIFDV…RMVLYGELQI (62 aa)) is the TRAM domain.

This sequence belongs to the methylthiotransferase family. MiaB subfamily. Monomer. [4Fe-4S] cluster is required as a cofactor.

It localises to the cytoplasm. It catalyses the reaction N(6)-dimethylallyladenosine(37) in tRNA + (sulfur carrier)-SH + AH2 + 2 S-adenosyl-L-methionine = 2-methylsulfanyl-N(6)-dimethylallyladenosine(37) in tRNA + (sulfur carrier)-H + 5'-deoxyadenosine + L-methionine + A + S-adenosyl-L-homocysteine + 2 H(+). Functionally, catalyzes the methylthiolation of N6-(dimethylallyl)adenosine (i(6)A), leading to the formation of 2-methylthio-N6-(dimethylallyl)adenosine (ms(2)i(6)A) at position 37 in tRNAs that read codons beginning with uridine. The chain is tRNA-2-methylthio-N(6)-dimethylallyladenosine synthase from Campylobacter concisus (strain 13826).